A 306-amino-acid chain; its full sequence is Glutaminase (306 aa).

Residues serine 64, asparagine 115, glutamate 159, asparagine 166, tyrosine 190, tyrosine 242, and valine 260 each coordinate substrate.

It belongs to the glutaminase family. In terms of assembly, homotetramer.

The enzyme catalyses L-glutamine + H2O = L-glutamate + NH4(+). The chain is Glutaminase from Vibrio parahaemolyticus serotype O3:K6 (strain RIMD 2210633).